Reading from the N-terminus, the 215-residue chain is LexA repressor (215 aa).

The segment at residues 28–48 (RAEIAAELGFSSPNAAEEHLR) is a DNA-binding region (H-T-H motif). Active-site for autocatalytic cleavage activity residues include Ser133 and Lys170.

It belongs to the peptidase S24 family. As to quaternary structure, homodimer.

It catalyses the reaction Hydrolysis of Ala-|-Gly bond in repressor LexA.. Its function is as follows. Represses a number of genes involved in the response to DNA damage (SOS response), including recA and lexA. In the presence of single-stranded DNA, RecA interacts with LexA causing an autocatalytic cleavage which disrupts the DNA-binding part of LexA, leading to derepression of the SOS regulon and eventually DNA repair. In Burkholderia ambifaria (strain ATCC BAA-244 / DSM 16087 / CCUG 44356 / LMG 19182 / AMMD) (Burkholderia cepacia (strain AMMD)), this protein is LexA repressor.